A 436-amino-acid chain; its full sequence is F-box/LRR-repeat protein 20 (436 aa).

The F-box domain maps to 22 to 68 (AVINKKLPKELLLRIFSFLDVVTLCRCAQVSRAWNVLALDGSNWQRI). LRR repeat units follow at residues 74–100 (QRDIEGRVVENISKRCGGFLRKLSLRG), 101–126 (CLGVGDNALRTFAQNCRNIEVLNLNG), 127–152 (CTKTTDATCTSLSKFCSKLRHLDLAS), 153–178 (CTSITNMSLKALSEGCPLLEQLNISW), 179–204 (CDQVTKDGIQALVRGCGGLKALFLKG), 205–230 (CTQLEDEALKYIGAHCPELVTLNLQT), 231–256 (CLQITDEGLITICRGCHKLQSLCASG), 257–282 (CSNITDAILNALGQNCPRLRILEVAR), 283–308 (CSQLTDVGFTTLARNCHELEKMDLEE), 309–334 (CVQITDSTLIQLSIHCPRLQVLSLSH), 335–363 (CELITDDGIRHLGNGACAHDQLEVIELDN), 364–388 (CPLITDASLEHLKSCHSLERIELYD), and 389–414 (CQQITRAGIKRLRTHLPNIKVHAYFA). Threonine 417 is modified (phosphothreonine). Phosphoserine is present on serine 421.

In terms of assembly, interacts with SKP1 and CUL1.

It is found in the cytoplasm. In terms of biological role, substrate-recognition component of the SCF (SKP1-CUL1-F-box protein)-type E3 ubiquitin ligase complex. Role in neural transmission. The chain is F-box/LRR-repeat protein 20 (FBXL20) from Bos taurus (Bovine).